Reading from the N-terminus, the 110-residue chain is UPF0145 protein BLD_1357 (110 aa).

Belongs to the UPF0145 family.

The protein is UPF0145 protein BLD_1357 of Bifidobacterium longum (strain DJO10A).